Here is a 484-residue protein sequence, read N- to C-terminus: Replication factor C large subunit (484 aa).

46–53 (GPPGSGKT) serves as a coordination point for ATP. Composition is skewed to basic and acidic residues over residues 419–432 (VKTETPKKKEKTKE), 442–451 (RISEPPEPLK), and 459–478 (KSVEKADTKEKEKKDPKKQA). The interval 419–484 (VKTETPKKKE…KKQATLDSFF (66 aa)) is disordered.

It belongs to the activator 1 small subunits family. RfcL subfamily. In terms of assembly, heteromultimer composed of small subunits (RfcS) and large subunits (RfcL).

Its function is as follows. Part of the RFC clamp loader complex which loads the PCNA sliding clamp onto DNA. This chain is Replication factor C large subunit, found in Methanococcus maripaludis (strain C5 / ATCC BAA-1333).